The primary structure comprises 266 residues: Glutamate racemase 1 (266 aa).

Substrate contacts are provided by residues 11-12 (DS) and 43-44 (YG). Cysteine 74 (proton donor/acceptor) is an active-site residue. Residue 75–76 (NT) coordinates substrate. Residue cysteine 182 is the Proton donor/acceptor of the active site. 183–184 (TH) serves as a coordination point for substrate.

It belongs to the aspartate/glutamate racemases family.

It catalyses the reaction L-glutamate = D-glutamate. It participates in cell wall biogenesis; peptidoglycan biosynthesis. In terms of biological role, provides the (R)-glutamate required for cell wall biosynthesis. The protein is Glutamate racemase 1 of Caldanaerobacter subterraneus subsp. tengcongensis (strain DSM 15242 / JCM 11007 / NBRC 100824 / MB4) (Thermoanaerobacter tengcongensis).